Consider the following 132-residue polypeptide: MTMSDPIADMLTRVRNANMVRHEKIELPASNIKKQIAEILKSEGFIKNVEFVEDDKQGVLRLFLKYGQNNERVITGLKRISKPGLRVYAKADEVPKVLNGLGIALVSTSEGIVTDREARKRNVGGEVLAYVW.

Belongs to the universal ribosomal protein uS8 family. In terms of assembly, part of the 30S ribosomal subunit. Contacts proteins S5 and S12.

Functionally, one of the primary rRNA binding proteins, it binds directly to 16S rRNA central domain where it helps coordinate assembly of the platform of the 30S subunit. This Staphylococcus carnosus (strain TM300) protein is Small ribosomal subunit protein uS8.